Reading from the N-terminus, the 1152-residue chain is Autotransporter adhesin BpaC (1152 aa).

The first 71 residues, 1–71, serve as a signal peptide directing secretion; that stretch reads MNRIFKSIWC…PFAEEAMAAN (71 aa). Residues 72–1061 are surface exposed passenger domain; it reads NAGVCLTYNG…VGQLNSAVSG (990 aa). Disordered stretches follow at residues 420-886 and 900-949; these read GLQG…AGAT and TATG…ESAA. A compositionally biased stretch (polar residues) spans 427 to 442; that stretch reads ANTGTASGDNSTASGD. A compositionally biased stretch (low complexity) spans 443 to 504; the sequence is NATASGTNST…ANGTNSTASG (62 aa). A compositionally biased stretch (polar residues) spans 505–519; it reads DNSTASGTNASATGE. Residues 520-588 show a composition bias toward low complexity; it reads NSTATGTDST…ANGTNSTASG (69 aa). A compositionally biased stretch (polar residues) spans 589 to 603; the sequence is DNSTASGTNASATGE. The span at 604–630 shows a compositional bias: low complexity; that stretch reads NSTATGTDSTASGSNSTANGTNSTASG. The segment covering 631–645 has biased composition (polar residues); sequence DNSTASGTNASATGE. The segment covering 646 to 672 has biased composition (low complexity); it reads NSTATGTDSTASGSNSTANGTNSTASG. The segment covering 673–687 has biased composition (polar residues); the sequence is DNSTASGTNASATGE. The span at 688–714 shows a compositional bias: low complexity; sequence NSTATGTDSTASGSNSTANGTNSTASG. The segment covering 715–729 has biased composition (polar residues); that stretch reads DNSTASGTNASATGE. Residues 730–756 show a composition bias toward low complexity; that stretch reads NSTATGTDSTASGSNSTANGANSTASG. Positions 757-771 are enriched in polar residues; it reads DNSTASGTNASATGE. Low complexity-rich tracts occupy residues 772–840 and 848–886; these read NSTA…TASG and TNAS…AGAT. Positions 1062-1099 are outer membrane translocation of the passenger domain; it reads IRNQMDGMQGQIDTLARDAYSGIAAATALTMIPDVDPG. Residues 1100–1152 form a translocator domain region; that stretch reads KTLAVGIGTANFKGYQASALGATARITQNLKVKTGVSYSGSNYVWGAGMSYQW.

Belongs to the autotransporter-2 (AT-2) (TC 1.B.40) family. In terms of assembly, homotrimer.

Its subcellular location is the cell surface. It is found in the cell outer membrane. Its function is as follows. Involved in virulence. Mediates adherence to human respiratory epithelial cells. The chain is Autotransporter adhesin BpaC from Burkholderia pseudomallei (strain 1026b).